The chain runs to 276 residues: Alpha N-terminal protein methyltransferase 1 (276 aa).

Residues 1–57 (MTTTLEEQLSDKLQMMDETTDKVQGSSKQKDDSSIAASSDAKTASPSSSDSSTKVAA) are disordered. Positions 34 to 57 (SIAASSDAKTASPSSSDSSTKVAA) are enriched in low complexity. Residues Gly-114, Arg-119, 136 to 138 (EQD), 167 to 168 (LQ), and Gln-182 contribute to the S-adenosyl-L-methionine site.

It belongs to the methyltransferase superfamily. NTM1 family.

The enzyme catalyses N-terminal L-alanyl-L-prolyl-L-lysyl-[protein] + 3 S-adenosyl-L-methionine = N-terminal N,N,N-trimethyl-L-alanyl-L-prolyl-L-lysyl-[protein] + 3 S-adenosyl-L-homocysteine + 3 H(+). The catalysed reaction is N-terminal L-seryl-L-prolyl-L-lysyl-[protein] + 3 S-adenosyl-L-methionine = N-terminal N,N,N-trimethyl-L-seryl-L-prolyl-L-lysyl-[protein] + 3 S-adenosyl-L-homocysteine + 3 H(+). It carries out the reaction N-terminal L-prolyl-L-prolyl-L-lysyl-[protein] + 2 S-adenosyl-L-methionine = N-terminal N,N-dimethyl-L-prolyl-L-prolyl-L-lysyl-[protein] + 2 S-adenosyl-L-homocysteine + 2 H(+). Alpha-N-methyltransferase that methylates the N-terminus of target proteins containing the N-terminal motif [Ala/Pro/Ser]-Pro-Lys when the initiator Met is cleaved. Specifically catalyzes mono-, di- or tri-methylation of exposed alpha-amino group of Ala or Ser residue in the [Ala/Ser]-Pro-Lys motif and mono- or di-methylation of Pro in the Pro-Pro-Lys motif. The polypeptide is Alpha N-terminal protein methyltransferase 1 (Ntmt) (Drosophila melanogaster (Fruit fly)).